A 168-amino-acid polypeptide reads, in one-letter code: Peptide deformylase 2 (168 aa).

Positions 91 and 133 each coordinate Fe cation. Glu-134 is an active-site residue. Position 137 (His-137) interacts with Fe cation.

This sequence belongs to the polypeptide deformylase family. Fe(2+) serves as cofactor.

The enzyme catalyses N-terminal N-formyl-L-methionyl-[peptide] + H2O = N-terminal L-methionyl-[peptide] + formate. Removes the formyl group from the N-terminal Met of newly synthesized proteins. Requires at least a dipeptide for an efficient rate of reaction. N-terminal L-methionine is a prerequisite for activity but the enzyme has broad specificity at other positions. The protein is Peptide deformylase 2 of Vibrio vulnificus (strain CMCP6).